We begin with the raw amino-acid sequence, 218 residues long: MLVVDSKTMKKIDQYAIDVLKVPSICLVERAALAVIKNINLEKRTSFAIVVGVGNNGADGLAIARNLLAMGKYVEIYIVGDLTKQSQDFKLNLDSCKRLTDKIFEPKSIEDLAIMERNLEEVSTIIDAIFGTGLNRTVGGMQSYMISLINRTMKYTISVDIPSGLDGDSGRNWGEVVDSDLIISMQIMKRGVYEKSHFKDKCIVEDIGIPQKAIRAIL.

The region spanning 9–215 (MKKIDQYAID…DIGIPQKAIR (207 aa)) is the YjeF N-terminal domain. 55–59 (NNGAD) lines the (6S)-NADPHX pocket. K(+) contacts are provided by Asn-56 and Asp-127. Residues 131–137 (GTGLNRT) and Asp-160 each bind (6S)-NADPHX. Ser-163 contributes to the K(+) binding site.

This sequence belongs to the NnrE/AIBP family. Requires K(+) as cofactor.

The enzyme catalyses (6R)-NADHX = (6S)-NADHX. The catalysed reaction is (6R)-NADPHX = (6S)-NADPHX. Catalyzes the epimerization of the S- and R-forms of NAD(P)HX, a damaged form of NAD(P)H that is a result of enzymatic or heat-dependent hydration. This is a prerequisite for the S-specific NAD(P)H-hydrate dehydratase to allow the repair of both epimers of NAD(P)HX. In Anaerococcus prevotii (strain ATCC 9321 / DSM 20548 / JCM 6508 / NCTC 11806 / PC1) (Peptostreptococcus prevotii), this protein is NAD(P)H-hydrate epimerase.